The primary structure comprises 141 residues: ATP synthase epsilon chain (141 aa).

It belongs to the ATPase epsilon chain family. F-type ATPases have 2 components, CF(1) - the catalytic core - and CF(0) - the membrane proton channel. CF(1) has five subunits: alpha(3), beta(3), gamma(1), delta(1), epsilon(1). CF(0) has three main subunits: a, b and c.

It is found in the cell inner membrane. Functionally, produces ATP from ADP in the presence of a proton gradient across the membrane. The chain is ATP synthase epsilon chain from Methylobacillus flagellatus (strain ATCC 51484 / DSM 6875 / VKM B-1610 / KT).